The following is a 233-amino-acid chain: MNKILLQCDNLCKRYQEGTVQTDVLHDVSFSIGEGEMMAIVGSSGSGKSTLLHLLGGLDTPTSGDVIFSGQPMSKLSSAAKAELRNQKLGFIYQFHHLLPDFTALENVAMPLLIGKKKPAEIDARAREMLHAVGLEHRATHRPSELSGGERQRVAIARALVNNPRLVLADEPTGNLDARNADSIFELLGELNRLQGTAFLVVTHDLQLAKRMSRQLEMRDGRLTAELSLMGAE.

The ABC transporter domain occupies 6–233 (LQCDNLCKRY…TAELSLMGAE (228 aa)). 42–49 (GSSGSGKS) is a binding site for ATP.

It belongs to the ABC transporter superfamily. Lipoprotein translocase (TC 3.A.1.125) family. In terms of assembly, the complex is composed of two ATP-binding proteins (LolD) and two transmembrane proteins (LolC and LolE).

The protein localises to the cell inner membrane. Its function is as follows. Part of the ABC transporter complex LolCDE involved in the translocation of mature outer membrane-directed lipoproteins, from the inner membrane to the periplasmic chaperone, LolA. Responsible for the formation of the LolA-lipoprotein complex in an ATP-dependent manner. The chain is Lipoprotein-releasing system ATP-binding protein LolD from Salmonella paratyphi A (strain ATCC 9150 / SARB42).